A 334-amino-acid polypeptide reads, in one-letter code: N-chimaerin (334 aa).

Polar residues predominate over residues 1–10 (MPSKESWSGR). Residues 1–22 (MPSKESWSGRKTNRATVHKSKQ) form a disordered region. A Phosphothreonine modification is found at T67. The Phorbol-ester/DAG-type zinc finger occupies 80–130 (VHNFKVHTFRGPHWCEYCANFMWGLIAQGVKCADCGLNVHKQCSKMVPNDC). The 192-residue stretch at 143–334 (CDLTTLVKAR…LLIKNEDILF (192 aa)) folds into the Rho-GAP domain. T215 bears the Phosphothreonine mark.

Interacts with EPHA4; effector of EPHA4 in axon guidance linking EPHA4 activation to RAC1 regulation. In terms of processing, phosphorylated. Phosphorylation is EPHA4 kinase activity-dependent.

GTPase-activating protein for p21-rac and a phorbol ester receptor. Involved in the assembly of neuronal locomotor circuits as a direct effector of EPHA4 in axon guidance. This chain is N-chimaerin (CHN1), found in Bos taurus (Bovine).